A 218-amino-acid polypeptide reads, in one-letter code: Probable transaldolase (218 aa).

The active-site Schiff-base intermediate with substrate is K83.

Belongs to the transaldolase family. Type 3B subfamily.

It is found in the cytoplasm. The enzyme catalyses D-sedoheptulose 7-phosphate + D-glyceraldehyde 3-phosphate = D-erythrose 4-phosphate + beta-D-fructose 6-phosphate. Its pathway is carbohydrate degradation; pentose phosphate pathway; D-glyceraldehyde 3-phosphate and beta-D-fructose 6-phosphate from D-ribose 5-phosphate and D-xylulose 5-phosphate (non-oxidative stage): step 2/3. Its function is as follows. Transaldolase is important for the balance of metabolites in the pentose-phosphate pathway. The chain is Probable transaldolase from Thermotoga sp. (strain RQ2).